Consider the following 518-residue polypeptide: Cell wall biosynthesis protein LcpA (518 aa).

Residues 1–31 (MTEKYRPVRDIKPAPAAMQSTKQAGHPVFRS) are Cytoplasmic-facing. A helical membrane pass occupies residues 32 to 52 (VVAFVSVLVLLVSGLGYLAVG). Residues 53-518 (KVDGVASGNL…AGGDGPRCVN (466 aa)) lie on the Periplasmic side of the membrane. The segment at 485–518 (AVTSSTVGQPGADVGEPIESPEFDAGGDGPRCVN) is disordered.

This sequence belongs to the LytR/CpsA/Psr (LCP) family. In terms of assembly, forms homodimers and homotetramers.

The protein resides in the cell inner membrane. Functionally, involved in cell wall biosynthesis. May be responsible for the transfer of arabinogalactan onto peptidoglycan. In vitro, has pyrophosphatase activity. The chain is Cell wall biosynthesis protein LcpA from Corynebacterium glutamicum (strain ATCC 13032 / DSM 20300 / JCM 1318 / BCRC 11384 / CCUG 27702 / LMG 3730 / NBRC 12168 / NCIMB 10025 / NRRL B-2784 / 534).